Consider the following 198-residue polypeptide: Peptidyl-tRNA hydrolase (198 aa).

A tRNA-binding site is contributed by Tyr-16. His-21 functions as the Proton acceptor in the catalytic mechanism. Residues Tyr-67, Asn-69, and Asn-115 each contribute to the tRNA site.

Belongs to the PTH family. In terms of assembly, monomer.

Its subcellular location is the cytoplasm. The enzyme catalyses an N-acyl-L-alpha-aminoacyl-tRNA + H2O = an N-acyl-L-amino acid + a tRNA + H(+). In terms of biological role, hydrolyzes ribosome-free peptidyl-tRNAs (with 1 or more amino acids incorporated), which drop off the ribosome during protein synthesis, or as a result of ribosome stalling. Its function is as follows. Catalyzes the release of premature peptidyl moieties from peptidyl-tRNA molecules trapped in stalled 50S ribosomal subunits, and thus maintains levels of free tRNAs and 50S ribosomes. In Gloeobacter violaceus (strain ATCC 29082 / PCC 7421), this protein is Peptidyl-tRNA hydrolase.